An 85-amino-acid chain; its full sequence is Large ribosomal subunit protein bL27 (85 aa).

Residues 1–20 (MAHKKAGGSTRNGRDSESKR) form a disordered region.

Belongs to the bacterial ribosomal protein bL27 family.

The polypeptide is Large ribosomal subunit protein bL27 (Azotobacter vinelandii (strain DJ / ATCC BAA-1303)).